Consider the following 167-residue polypeptide: Caltractin (167 aa).

Residues 1 to 18 show a composition bias toward basic residues; it reads MSSARTVRKDKPRGRHHG. The segment at 1–23 is disordered; that stretch reads MSSARTVRKDKPRGRHHGLTQQK. EF-hand domains lie at 22-57, 58-93, 95-130, and 131-166; these read QKRQ…LGFE, MTEE…KIGE, DTKE…LGEN, and FTVK…TSYA. Residues D35, D37, S39, T41, E46, D71, D73, S75, E82, D108, D110, N112, K114, D119, D144, D146, D148, E150, and E155 each contribute to the Ca(2+) site.

Belongs to the centrin family.

It localises to the cytoplasm. Its subcellular location is the cytoskeleton. It is found in the microtubule organizing center. In terms of biological role, plays a fundamental role in microtubule-organizing center structure and function. The chain is Caltractin from Atriplex nummularia (Old man saltbush).